The chain runs to 95 residues: Aspartyl/glutamyl-tRNA(Asn/Gln) amidotransferase subunit C (95 aa).

It belongs to the GatC family. In terms of assembly, heterotrimer of A, B and C subunits.

The catalysed reaction is L-glutamyl-tRNA(Gln) + L-glutamine + ATP + H2O = L-glutaminyl-tRNA(Gln) + L-glutamate + ADP + phosphate + H(+). The enzyme catalyses L-aspartyl-tRNA(Asn) + L-glutamine + ATP + H2O = L-asparaginyl-tRNA(Asn) + L-glutamate + ADP + phosphate + 2 H(+). Its function is as follows. Allows the formation of correctly charged Asn-tRNA(Asn) or Gln-tRNA(Gln) through the transamidation of misacylated Asp-tRNA(Asn) or Glu-tRNA(Gln) in organisms which lack either or both of asparaginyl-tRNA or glutaminyl-tRNA synthetases. The reaction takes place in the presence of glutamine and ATP through an activated phospho-Asp-tRNA(Asn) or phospho-Glu-tRNA(Gln). The polypeptide is Aspartyl/glutamyl-tRNA(Asn/Gln) amidotransferase subunit C (Chlorobium phaeobacteroides (strain BS1)).